A 424-amino-acid polypeptide reads, in one-letter code: Exodeoxyribonuclease 7 large subunit (424 aa).

This sequence belongs to the XseA family. Heterooligomer composed of large and small subunits.

Its subcellular location is the cytoplasm. The catalysed reaction is Exonucleolytic cleavage in either 5'- to 3'- or 3'- to 5'-direction to yield nucleoside 5'-phosphates.. In terms of biological role, bidirectionally degrades single-stranded DNA into large acid-insoluble oligonucleotides, which are then degraded further into small acid-soluble oligonucleotides. This chain is Exodeoxyribonuclease 7 large subunit, found in Cyanothece sp. (strain PCC 7425 / ATCC 29141).